A 312-amino-acid chain; its full sequence is MIEFEKPNITKIDENKDYGKFVVEPLERGYGTTLGNSLRRVLLASLPGAAVTSINIEGVLHEFDTISGVREDVMQIILNVKGIAVKSYVQDEKIIELDVEGPAEVTAGDILTDSDIEIINPDHYLFTIGEGASFKATMTVNSGRGYVPADENKKDDAPVGTLAVDSIYTPVTKVNYQVEPARVGSNDGFDKLTLEILTNGTIIPEDALGLSARILTEHLNLFTNLTEVAIAADVMKEAEKTSDDRILERTIEELDLSVRSYNCLKRAGINTVFDLTEKSEPEMMKVRNLGRKSLEEVKVKLADLGLGLKNDK.

The segment at 1 to 226 (MIEFEKPNIT…EHLNLFTNLT (226 aa)) is alpha N-terminal domain (alpha-NTD). The segment at 243–312 (DDRILERTIE…DLGLGLKNDK (70 aa)) is alpha C-terminal domain (alpha-CTD).

The protein belongs to the RNA polymerase alpha chain family. In terms of assembly, homodimer. The RNAP catalytic core consists of 2 alpha, 1 beta, 1 beta' and 1 omega subunit. When a sigma factor is associated with the core the holoenzyme is formed, which can initiate transcription.

The enzyme catalyses RNA(n) + a ribonucleoside 5'-triphosphate = RNA(n+1) + diphosphate. DNA-dependent RNA polymerase catalyzes the transcription of DNA into RNA using the four ribonucleoside triphosphates as substrates. The chain is DNA-directed RNA polymerase subunit alpha from Streptococcus sanguinis (strain SK36).